A 393-amino-acid chain; its full sequence is Dual specificity mitogen-activated protein kinase kinase 1 (393 aa).

The segment at 1-27 (MPKKKPTPIQLNPAPDGSAVNGTSSAE) is disordered. Positions 68–361 (FEKISELGAG…LKQLMVHAFI (294 aa)) constitute a Protein kinase domain. ATP-binding positions include 74-82 (LGAGNGGVV) and Lys97. Asp190 (proton acceptor) is an active-site residue. A phosphoserine; by RAF mark is found at Ser218 and Ser222. Residues 270 to 307 (ELELMFGCQVEGDAAETPPRPRTPGRPLSSYGMDSRPP) form an RAF1-binding region. Residue Thr286 is modified to Phosphothreonine. Thr292 is modified (phosphothreonine; by MAPK1). Residue Ser298 is modified to Phosphoserine; by PAK.

This sequence belongs to the protein kinase superfamily. STE Ser/Thr protein kinase family. MAP kinase kinase subfamily. As to quaternary structure, found in a complex with at least BRAF, HRAS, MAP2K1, MAPK3/ERK1 and RGS14. Forms a heterodimer with MAP2K2/MEK2. Forms heterodimers with KSR2 which further dimerize to form tetramers. Interacts with KSR1 or KSR2 and BRAF; the interaction with KSR1 or KSR2 mediates KSR1-BRAF or KSR2-BRAF dimerization. Interacts with ARBB2, LAMTOR3, MAPK1/ERK2 and RAF1. Interacts with MAPK1/ERK2. Interacts with MORG1. Interacts with PPARG. Interacts with isoform 1 of VRK2. Interacts with SGK1. Interacts with BIRC6/bruce. Interacts with KAT7; the interaction promotes KAT7 phosphorylation. Interacts with RAF1 and NEK10; the interaction is required for ERK1/2-signaling pathway activation in response to UV irradiation. Interacts with TRAF3IP3. Interacts with MOS. Phosphorylation at Ser-218 and Ser-222 by MAP kinase kinase kinases (BRAF or MEKK1) positively regulates the kinase activity. Also phosphorylated at Thr-292 by MAPK1/ERK2 and at Ser-298 by PAK. MAPK1/ERK2 phosphorylation of Thr-292 occurs in response to cellular adhesion and leads to inhibition of Ser-298 phosphorylation by PAK. Autophosphorylated at Ser-218 and Ser-222, autophosphosphorylation is promoted by NEK10 following UV irradiation.

It localises to the cytoplasm. It is found in the cytoskeleton. The protein localises to the microtubule organizing center. Its subcellular location is the centrosome. The protein resides in the spindle pole body. It localises to the nucleus. It is found in the membrane. It carries out the reaction L-seryl-[protein] + ATP = O-phospho-L-seryl-[protein] + ADP + H(+). It catalyses the reaction L-threonyl-[protein] + ATP = O-phospho-L-threonyl-[protein] + ADP + H(+). The enzyme catalyses L-tyrosyl-[protein] + ATP = O-phospho-L-tyrosyl-[protein] + ADP + H(+). Its activity is regulated as follows. Ras proteins such as HRAS mediate the activation of RAF proteins such as RAF1 or BRAF which in turn activate extracellular signal-regulated kinases (ERK) through MAPK (mitogen-activated protein kinases) and ERK kinases MAP2K1/MEK1 and MAP2K2/MEK2. Activation occurs through phosphorylation of Ser-218 and Ser-222. MAP2K1/MEK1 binds KSR1 or KSR2 releasing the inhibitory intramolecular interaction between KSR1 or KSR2 protein kinase and N-terminal domains. This allows KSR1 or KSR2 dimerization with BRAF leading to BRAF activation and phosphorylation of MAP2K1. MAP2K1/MEK1 is also the target of negative feed-back regulation by its substrate kinases, such as MAPK1/ERK2. These phosphorylate MAP2K1/MEK1 on Thr-292, thereby facilitating dephosphorylation of the activating residues Ser-218 and Ser-222. Inhibited by serine/threonine phosphatase 2A. Functionally, dual specificity protein kinase which acts as an essential component of the MAP kinase signal transduction pathway. Binding of extracellular ligands such as growth factors, cytokines and hormones to their cell-surface receptors activates RAS and this initiates RAF1 activation. RAF1 then further activates the dual-specificity protein kinases MAP2K1/MEK1 and MAP2K2/MEK2. Both MAP2K1/MEK1 and MAP2K2/MEK2 function specifically in the MAPK/ERK cascade, and catalyze the concomitant phosphorylation of a threonine and a tyrosine residue in a Thr-Glu-Tyr sequence located in the extracellular signal-regulated kinases MAPK3/ERK1 and MAPK1/ERK2, leading to their activation and further transduction of the signal within the MAPK/ERK cascade. Activates BRAF in a KSR1 or KSR2-dependent manner; by binding to KSR1 or KSR2 releases the inhibitory intramolecular interaction between KSR1 or KSR2 protein kinase and N-terminal domains which promotes KSR1 or KSR2-BRAF dimerization and BRAF activation. Depending on the cellular context, this pathway mediates diverse biological functions such as cell growth, adhesion, survival and differentiation, predominantly through the regulation of transcription, metabolism and cytoskeletal rearrangements. One target of the MAPK/ERK cascade is peroxisome proliferator-activated receptor gamma (PPARG), a nuclear receptor that promotes differentiation and apoptosis. MAP2K1/MEK1 has been shown to export PPARG from the nucleus. The MAPK/ERK cascade is also involved in the regulation of endosomal dynamics, including lysosome processing and endosome cycling through the perinuclear recycling compartment (PNRC), as well as in the fragmentation of the Golgi apparatus during mitosis. This Pan troglodytes (Chimpanzee) protein is Dual specificity mitogen-activated protein kinase kinase 1 (MAP2K1).